We begin with the raw amino-acid sequence, 201 residues long: CASP-like protein 1F2 (201 aa).

Residues 1 to 29 lie on the Cytoplasmic side of the membrane; the sequence is MITSIATTTAGAFEVKSLGFIPYPSQPKR. Residues 30–50 traverse the membrane as a helical segment; it reads IFFMAQVIFRILAIAFAVASI. Residues 51 to 78 are Extracellular-facing; that stretch reads SAMVTSDQNVIVFGMDTAARYSYSSAFR. Residues 79 to 99 form a helical membrane-spanning segment; the sequence is FLVGANAVVCGFSVLSLIFVC. Topologically, residues 100–119 are cytoplasmic; the sequence is LMSRRSEAILEKNYYLFLHD. Residues 120 to 140 form a helical membrane-spanning segment; it reads MVMMVMMVSGCSAATAIGYVG. Residues 141–162 are Extracellular-facing; it reads RYGEKEITWTAVCDFVGKFCNQ. The helical transmembrane segment at 163-183 threads the bilayer; sequence ALVSIVLAYLALFCYVALTTL. Residues 184–201 lie on the Cytoplasmic side of the membrane; that stretch reads AAHKLNHSSSTAAIRQNE.

Belongs to the Casparian strip membrane proteins (CASP) family. Homodimer and heterodimers.

It is found in the cell membrane. The chain is CASP-like protein 1F2 from Ricinus communis (Castor bean).